We begin with the raw amino-acid sequence, 205 residues long: Holliday junction branch migration complex subunit RuvA (205 aa).

The interval 1–65 (MIGRLRGAVA…SAGLRLYGFL (65 aa)) is domain I. Residues 66–144 (TREDRRAFVL…TDGPVLMSAP (79 aa)) form a domain II region. Residues 145–153 (TSSAPSAPA) form a flexible linker region. The interval 153–205 (AKPAPTGDAVAALMGLGVAEVNARRVVEAAAAELGEEATVQALIKAGLKELGR) is domain III.

Belongs to the RuvA family. As to quaternary structure, homotetramer. Forms an RuvA(8)-RuvB(12)-Holliday junction (HJ) complex. HJ DNA is sandwiched between 2 RuvA tetramers; dsDNA enters through RuvA and exits via RuvB. An RuvB hexamer assembles on each DNA strand where it exits the tetramer. Each RuvB hexamer is contacted by two RuvA subunits (via domain III) on 2 adjacent RuvB subunits; this complex drives branch migration. In the full resolvosome a probable DNA-RuvA(4)-RuvB(12)-RuvC(2) complex forms which resolves the HJ.

The protein localises to the cytoplasm. Functionally, the RuvA-RuvB-RuvC complex processes Holliday junction (HJ) DNA during genetic recombination and DNA repair, while the RuvA-RuvB complex plays an important role in the rescue of blocked DNA replication forks via replication fork reversal (RFR). RuvA specifically binds to HJ cruciform DNA, conferring on it an open structure. The RuvB hexamer acts as an ATP-dependent pump, pulling dsDNA into and through the RuvAB complex. HJ branch migration allows RuvC to scan DNA until it finds its consensus sequence, where it cleaves and resolves the cruciform DNA. The polypeptide is Holliday junction branch migration complex subunit RuvA (Caulobacter vibrioides (strain ATCC 19089 / CIP 103742 / CB 15) (Caulobacter crescentus)).